We begin with the raw amino-acid sequence, 586 residues long: uncharacterized protein (586 aa).

6 helical membrane-spanning segments follow: residues 95-115, 129-151, 155-177, 198-217, 247-267, and 284-304; these read VIAG…IHFV, IYSF…FGVQ, IPWL…RIII, YFIY…FQFL, YIGG…WLFL, and IVAT…FATL.

Belongs to the ycf78 family.

It localises to the plastid membrane. This is an uncharacterized protein from Prototheca wickerhamii.